An 870-amino-acid chain; its full sequence is Leucine--tRNA ligase (870 aa).

The 'HIGH' region motif lies at 42-52 (PYPSGKLHMGH). Residues 629–633 (KMSKS) carry the 'KMSKS' region motif. ATP is bound at residue Lys632.

This sequence belongs to the class-I aminoacyl-tRNA synthetase family.

The protein resides in the cytoplasm. It carries out the reaction tRNA(Leu) + L-leucine + ATP = L-leucyl-tRNA(Leu) + AMP + diphosphate. In Ectopseudomonas mendocina (strain ymp) (Pseudomonas mendocina), this protein is Leucine--tRNA ligase.